The following is a 306-amino-acid chain: L-lactate dehydrogenase (306 aa).

Residues Val11, Asp32, Lys37, and 76–77 (GA) contribute to the NAD(+) site. Substrate is bound by residues Gln79 and Arg85. NAD(+) contacts are provided by residues Ser98, 115-117 (VSN), and Ser140. 117-120 (NPVD) lines the substrate pocket. 145-148 (DTAR) contacts substrate. The beta-D-fructose 1,6-bisphosphate site is built by Arg150 and His165. The active-site Proton acceptor is His172. The residue at position 214 (Tyr214) is a Phosphotyrosine. Thr223 lines the substrate pocket.

This sequence belongs to the LDH/MDH superfamily. LDH family. Homotetramer.

It is found in the cytoplasm. The enzyme catalyses (S)-lactate + NAD(+) = pyruvate + NADH + H(+). The protein operates within fermentation; pyruvate fermentation to lactate; (S)-lactate from pyruvate: step 1/1. Its activity is regulated as follows. Allosterically activated by fructose 1,6-bisphosphate (FBP). In terms of biological role, catalyzes the conversion of lactate to pyruvate. This is L-lactate dehydrogenase from Synechococcus sp. (strain JA-3-3Ab) (Cyanobacteria bacterium Yellowstone A-Prime).